The sequence spans 513 residues: Fumarate reductase (513 aa).

Position 41 to 55 (41 to 55 (AIVIGGGLAGLSATN)) interacts with FAD. Phosphoserine is present on Ser100. Catalysis depends on residues His288 and Arg311.

This sequence belongs to the FAD-dependent oxidoreductase 2 family. FRD/SDH subfamily. It depends on FAD as a cofactor.

It localises to the cytoplasm. Its subcellular location is the mitochondrion. It is found in the nucleus. It carries out the reaction succinate + NAD(+) = fumarate + NADH + H(+). Its function is as follows. Irreversibly catalyzes the reduction of fumarate to succinate. The sequence is that of Fumarate reductase (osm1) from Schizosaccharomyces pombe (strain 972 / ATCC 24843) (Fission yeast).